Here is a 300-residue protein sequence, read N- to C-terminus: Zinc finger protein 705B (300 aa).

The region spanning 7-78 (VTFEDVAIDF…GRVFLQDQNP (72 aa)) is the KRAB domain. 3 C2H2-type zinc fingers span residues 172–194 (YQCNLCEKAYTNCFYLRRHKMTH), 200–222 (YACHLCGKAFTQCSHLRRHEKTH), and 228–250 (YKCHQCGKAFIQSFNLRRHERTH). The segment at 256–278 (YECDKSGKAFSQSSGFRGNKIIH) adopts a C2H2-type 4; degenerate zinc-finger fold.

It belongs to the krueppel C2H2-type zinc-finger protein family.

The protein localises to the nucleus. In terms of biological role, may be involved in transcriptional regulation. The chain is Zinc finger protein 705B (ZNF705B) from Homo sapiens (Human).